A 371-amino-acid chain; its full sequence is MSRISLSNFLSLPRYKFLLFSVVLIIVMTTLVFNGHDYKQTLNDRLTSLKNNFVEENDNAVLKEEPGKYTYMSLFTMPSTEEDYYFNATRVLIHRLKYHPTTKSKYPIHILALRGVDEWKIERFRKDGASVIVIDPIASSDIVYDTSSFSQEISARYEQMFSKLRIFEQIQFDKICVIDSDILIMKNIDDIFDTPYMYQQINTLNYTRLPSYTKPDDDTVYHFNEDFKEYGASRSEFYPYLLAAVSDRGEHHSIPPEDTPYFNAGLMLIRPSELHFNRILKIGRFPYMYENAKMMEQSLLNLAFSLDGWFPWTRLDPYYNGVWPSIDERPLLKTAHGKFWNIGSSEFAPVYLADWYAAYGEMLSFHKYETH.

Residues 17-33 (FLLFSVVLIIVMTTLVF) form a helical membrane-spanning segment.

It to S.pombe SpBC4C3.08 and SpBC4C3.09.

It localises to the membrane. This is an uncharacterized protein from Schizosaccharomyces pombe (strain 972 / ATCC 24843) (Fission yeast).